The following is a 697-amino-acid chain: MPAAAGDGLGESPSRFLAGEKPPVQLAESFLPACVSSVSRETLRTFQHTKRVGSYLIGRKLGEGSFAKVREGLHVGTGEKVAIKVIDKKKAKKDTYVTKNLRREGQIQQMIRHPNITQLLDILETENSYYLVMELCTGGNLMHKIYERKRIEEHEARKYIRQLILAVEHLHRAGVVHRDLKIENLLLDENNNIKLIDFGLSNCAGILGYTDPFSTQCGSPAYAAPELLARKKYGPKVDVWSIGVNMYAMLTGTLPFTVEPFSLRALYQKMVDKDMNPLPTHLSPAAISFLRSLLEPDPLKRPNIQQALANRWLNDNYHGKGLHTYPNRIHLEDLSQSVVLHMSEKLGYKHSDVINVILSNRACHTLAVYFLLNRKLENYLLNMRKPDINDNVCHKNQFHQLEKYKMNKNSYEERRSKDLEKRGEQQQQQQRAMQRKLEKCSPSHRQSNCLTPQGHISKGPVKERRSSKSERESFGGLSPFHEVRITKPGCMTSCSLEYLEMQSPDPRTPKIMRRQDSHSQETVNVNMGSRIRETHLNVVRSFESVNREDQIESLSPNHQYRVLGSPVSFSPRHSSERILSPIFQFDNTSPIKGHSNQASFTYDDKSSPSSPESMSPTSPHSPHSPSCNNNISGNLGSPNCVRSRGRFPMMGIGQMLRKRNQVVSPKAEKPLETRMPALHQMSPGYASFNSSDMNGFC.

Residues 55-313 form the Protein kinase domain; it reads YLIGRKLGEG…IQQALANRWL (259 aa). Residues 61–69 and Lys84 contribute to the ATP site; that span reads LGEGSFAKV. Residue Asp179 is the Proton acceptor of the active site. Basic and acidic residues-rich tracts occupy residues 405–424 and 460–473; these read KMNK…KRGE and PVKE…ERES. Disordered regions lie at residues 405–480 and 586–642; these read KMNK…LSPF and DNTS…NCVR. Residues 586–600 are compositionally biased toward polar residues; that stretch reads DNTSPIKGHSNQASF. Residues 607 to 626 are compositionally biased toward low complexity; that stretch reads SPSSPESMSPTSPHSPHSPS. Polar residues predominate over residues 627-637; the sequence is CNNNISGNLGS.

This sequence belongs to the protein kinase superfamily. CAMK Ser/Thr protein kinase family. SNF1 subfamily.

The enzyme catalyses L-seryl-[protein] + ATP = O-phospho-L-seryl-[protein] + ADP + H(+). It carries out the reaction L-threonyl-[protein] + ATP = O-phospho-L-threonyl-[protein] + ADP + H(+). The sequence is that of Hormonally up-regulated neu tumor-associated kinase homolog (hunk) from Xenopus tropicalis (Western clawed frog).